A 917-amino-acid polypeptide reads, in one-letter code: Phosphoenolpyruvate carboxylase (917 aa).

Residues His145 and Lys578 contribute to the active site.

It belongs to the PEPCase type 1 family. The cofactor is Mg(2+).

It catalyses the reaction oxaloacetate + phosphate = phosphoenolpyruvate + hydrogencarbonate. Forms oxaloacetate, a four-carbon dicarboxylic acid source for the tricarboxylic acid cycle. This Azoarcus sp. (strain BH72) protein is Phosphoenolpyruvate carboxylase.